The primary structure comprises 300 residues: Tyrosine recombinase XerD (300 aa).

In terms of domain architecture, Core-binding (CB) spans 5-90 (YQCDPLIDAF…SLRRFYNYLL (86 aa)). The Tyr recombinase domain occupies 111 to 294 (HLPDSLSESQ…ARARLQELHQ (184 aa)). Residues Arg-151, Lys-175, His-246, Arg-249, and His-272 contribute to the active site. Tyr-281 (O-(3'-phospho-DNA)-tyrosine intermediate) is an active-site residue.

Belongs to the 'phage' integrase family. XerD subfamily. Forms a cyclic heterotetrameric complex composed of two molecules of XerC and two molecules of XerD.

The protein resides in the cytoplasm. Site-specific tyrosine recombinase, which acts by catalyzing the cutting and rejoining of the recombining DNA molecules. The XerC-XerD complex is essential to convert dimers of the bacterial chromosome into monomers to permit their segregation at cell division. It also contributes to the segregational stability of plasmids. The chain is Tyrosine recombinase XerD from Shewanella oneidensis (strain ATCC 700550 / JCM 31522 / CIP 106686 / LMG 19005 / NCIMB 14063 / MR-1).